We begin with the raw amino-acid sequence, 117 residues long: Ribosome-binding factor A (117 aa).

The protein belongs to the RbfA family. In terms of assembly, monomer. Binds 30S ribosomal subunits, but not 50S ribosomal subunits or 70S ribosomes.

The protein localises to the cytoplasm. In terms of biological role, one of several proteins that assist in the late maturation steps of the functional core of the 30S ribosomal subunit. Associates with free 30S ribosomal subunits (but not with 30S subunits that are part of 70S ribosomes or polysomes). Required for efficient processing of 16S rRNA. May interact with the 5'-terminal helix region of 16S rRNA. This is Ribosome-binding factor A from Leptospira interrogans serogroup Icterohaemorrhagiae serovar Lai (strain 56601).